We begin with the raw amino-acid sequence, 909 residues long: ABC transporter B family member 1 (909 aa).

Residues 1–36 (MTKKNFNDEENESLLETYNKQQQKQSISTTNRSDQK) form a disordered region. Residues 14 to 36 (LLETYNKQQQKQSISTTNRSDQK) are compositionally biased toward polar residues. Residues 85–105 (LFIQIVSLVILAGYLISINAL) form a helical membrane-spanning segment. Residues 125-134 (TDSGSVSPTS) show a composition bias toward low complexity. Residues 125 to 147 (TDSGSVSPTSTPSPTPTPTPSPT) are disordered. The segment covering 135–145 (TPSPTPTPTPS) has biased composition (pro residues). 8 consecutive transmembrane segments (helical) span residues 182–202 (FSTF…LLLI), 206–226 (SFIY…YNVI), 275–295 (IIIV…VLHI), 347–367 (LPII…SLAM), 392–412 (LALV…SWLF), 480–500 (VILL…IVPV), 572–592 (GVFS…IVYV), and 607–627 (LTSF…ISSL). Positions 350-633 (ILAAMVALVF…ISSLMTDFLK (284 aa)) constitute an ABC transmembrane type-1 domain. Residues 666 to 902 (IELKDVEFSY…TDGIYHNLVK (237 aa)) enclose the ABC transporter domain. Position 701-708 (701-708 (GPSGGGKS)) interacts with ATP.

It belongs to the ABC transporter superfamily. ABCB family.

The protein resides in the membrane. This chain is ABC transporter B family member 1 (abcB1), found in Dictyostelium discoideum (Social amoeba).